Reading from the N-terminus, the 272-residue chain is GTP cyclohydrolase FolE2 (272 aa).

This sequence belongs to the GTP cyclohydrolase IV family.

The catalysed reaction is GTP + H2O = 7,8-dihydroneopterin 3'-triphosphate + formate + H(+). Its pathway is cofactor biosynthesis; 7,8-dihydroneopterin triphosphate biosynthesis; 7,8-dihydroneopterin triphosphate from GTP: step 1/1. Functionally, converts GTP to 7,8-dihydroneopterin triphosphate. This chain is GTP cyclohydrolase FolE2, found in Polynucleobacter asymbioticus (strain DSM 18221 / CIP 109841 / QLW-P1DMWA-1) (Polynucleobacter necessarius subsp. asymbioticus).